The primary structure comprises 787 residues: DNA ligase (787 aa).

NAD(+)-binding positions include Asp32–Asp36, Ser81–Leu82, and Glu121. Catalysis depends on Lys123, which acts as the N6-AMP-lysine intermediate. NAD(+)-binding residues include Arg144, Glu181, Lys297, and Lys321. Zn(2+) contacts are provided by Cys415, Cys418, Cys445, and Cys451. The region spanning Val703 to Asp787 is the BRCT domain.

This sequence belongs to the NAD-dependent DNA ligase family. LigA subfamily. It depends on Mg(2+) as a cofactor. The cofactor is Mn(2+).

It catalyses the reaction NAD(+) + (deoxyribonucleotide)n-3'-hydroxyl + 5'-phospho-(deoxyribonucleotide)m = (deoxyribonucleotide)n+m + AMP + beta-nicotinamide D-nucleotide.. In terms of biological role, DNA ligase that catalyzes the formation of phosphodiester linkages between 5'-phosphoryl and 3'-hydroxyl groups in double-stranded DNA using NAD as a coenzyme and as the energy source for the reaction. It is essential for DNA replication and repair of damaged DNA. This chain is DNA ligase, found in Pseudomonas syringae pv. tomato (strain ATCC BAA-871 / DC3000).